A 473-amino-acid polypeptide reads, in one-letter code: Ribosomal RNA small subunit methyltransferase F (473 aa).

S-adenosyl-L-methionine contacts are provided by residues 124-130 (ASAPGSK), E148, D175, and D193. The active-site Nucleophile is the C246.

It belongs to the class I-like SAM-binding methyltransferase superfamily. RsmB/NOP family.

It localises to the cytoplasm. It carries out the reaction cytidine(1407) in 16S rRNA + S-adenosyl-L-methionine = 5-methylcytidine(1407) in 16S rRNA + S-adenosyl-L-homocysteine + H(+). In terms of biological role, specifically methylates the cytosine at position 1407 (m5C1407) of 16S rRNA. In Aliivibrio salmonicida (strain LFI1238) (Vibrio salmonicida (strain LFI1238)), this protein is Ribosomal RNA small subunit methyltransferase F.